Here is a 252-residue protein sequence, read N- to C-terminus: Protein HEAT-INDUCED TAS1 TARGET 2 (252 aa).

It belongs to the heat induced plant HTT protein family. In terms of tissue distribution, expressed ubiquitously, including in seedlings, leaves, stems, inflorescences and siliques.

The protein resides in the cytoplasm. It is found in the nucleus. Functionally, mediates both basal and acquired thermotolerance via HSFA1s-directed pathways (e.g. HSFA1A, HSFA1B, and HSFA1D). Triggers the expression of HSFA1A and HSFA1B. The chain is Protein HEAT-INDUCED TAS1 TARGET 2 from Arabidopsis thaliana (Mouse-ear cress).